The following is a 210-amino-acid chain: UPF0301 protein CPS_1252 (210 aa).

It belongs to the UPF0301 (AlgH) family.

This chain is UPF0301 protein CPS_1252, found in Colwellia psychrerythraea (strain 34H / ATCC BAA-681) (Vibrio psychroerythus).